The primary structure comprises 478 residues: Protein nucleotidyltransferase YdiU (478 aa).

ATP-binding residues include G84, G86, R87, K107, D119, G120, R170, and R177. The active-site Proton acceptor is D246. Mg(2+) contacts are provided by N247 and D256. D256 contributes to the ATP binding site.

This sequence belongs to the SELO family. The cofactor is Mg(2+). It depends on Mn(2+) as a cofactor.

It catalyses the reaction L-seryl-[protein] + ATP = 3-O-(5'-adenylyl)-L-seryl-[protein] + diphosphate. The catalysed reaction is L-threonyl-[protein] + ATP = 3-O-(5'-adenylyl)-L-threonyl-[protein] + diphosphate. The enzyme catalyses L-tyrosyl-[protein] + ATP = O-(5'-adenylyl)-L-tyrosyl-[protein] + diphosphate. It carries out the reaction L-histidyl-[protein] + UTP = N(tele)-(5'-uridylyl)-L-histidyl-[protein] + diphosphate. It catalyses the reaction L-seryl-[protein] + UTP = O-(5'-uridylyl)-L-seryl-[protein] + diphosphate. The catalysed reaction is L-tyrosyl-[protein] + UTP = O-(5'-uridylyl)-L-tyrosyl-[protein] + diphosphate. Its function is as follows. Nucleotidyltransferase involved in the post-translational modification of proteins. It can catalyze the addition of adenosine monophosphate (AMP) or uridine monophosphate (UMP) to a protein, resulting in modifications known as AMPylation and UMPylation. This is Protein nucleotidyltransferase YdiU from Shigella boydii serotype 18 (strain CDC 3083-94 / BS512).